Reading from the N-terminus, the 116-residue chain is Ribosome-binding factor A (116 aa).

Belongs to the RbfA family. In terms of assembly, monomer. Binds 30S ribosomal subunits, but not 50S ribosomal subunits or 70S ribosomes.

It is found in the cytoplasm. Its function is as follows. One of several proteins that assist in the late maturation steps of the functional core of the 30S ribosomal subunit. Associates with free 30S ribosomal subunits (but not with 30S subunits that are part of 70S ribosomes or polysomes). Required for efficient processing of 16S rRNA. May interact with the 5'-terminal helix region of 16S rRNA. This is Ribosome-binding factor A from Mycoplasma pneumoniae (strain ATCC 29342 / M129 / Subtype 1) (Mycoplasmoides pneumoniae).